A 367-amino-acid polypeptide reads, in one-letter code: Isoflavone 4'-O-methyltransferase (367 aa).

Residues 209–212 (VGGG), aspartate 233, 233–234 (DQ), 253–254 (DM), and lysine 267 contribute to the S-adenosyl-L-methionine site. The Proton acceptor role is filled by histidine 271.

This sequence belongs to the class I-like SAM-binding methyltransferase superfamily. Cation-independent O-methyltransferase family. COMT subfamily.

It carries out the reaction a 4'-hydroxyisoflavone + S-adenosyl-L-methionine = a 4'-methoxyisoflavone + S-adenosyl-L-homocysteine + H(+). The catalysed reaction is (2R,3S)-2,4',7-trihydroxyisoflavanone + S-adenosyl-L-methionine = (2R,3S)-2,7-dihydroxy-4'-methoxyisoflavanone + S-adenosyl-L-homocysteine + H(+). Its function is as follows. 2-hydroxyisoflavanone 4'-O-methyltransferase involved in the biosynthesis of formononetin. Can use 2,7,4'-trihydroxyisoflavanone, (+)-6a-hydroxymaackiain or medicarpin as substrate, but not daidzein or (-)-6a-hydroxymaackiain. This is Isoflavone 4'-O-methyltransferase (HI4'OMT) from Glycyrrhiza echinata (Licorice).